The sequence spans 211 residues: dITP/XTP pyrophosphatase (211 aa).

Position 13-18 (13-18) interacts with substrate; that stretch reads THNPGK. Residues D45 and D74 each contribute to the Mg(2+) site. The active-site Proton acceptor is the D74. Residues S75, 160-163, K183, and 195-196 each bind substrate; these read FGYD and HR.

Belongs to the HAM1 NTPase family. In terms of assembly, homodimer. Mg(2+) is required as a cofactor.

The enzyme catalyses XTP + H2O = XMP + diphosphate + H(+). The catalysed reaction is dITP + H2O = dIMP + diphosphate + H(+). It carries out the reaction ITP + H2O = IMP + diphosphate + H(+). Its function is as follows. Pyrophosphatase that catalyzes the hydrolysis of nucleoside triphosphates to their monophosphate derivatives, with a high preference for the non-canonical purine nucleotides XTP (xanthosine triphosphate), dITP (deoxyinosine triphosphate) and ITP. Seems to function as a house-cleaning enzyme that removes non-canonical purine nucleotides from the nucleotide pool, thus preventing their incorporation into DNA/RNA and avoiding chromosomal lesions. The polypeptide is dITP/XTP pyrophosphatase (Bradyrhizobium diazoefficiens (strain JCM 10833 / BCRC 13528 / IAM 13628 / NBRC 14792 / USDA 110)).